The sequence spans 1306 residues: Disease resistance protein Roq1 (1306 aa).

The TIR domain occupies 10–179 (RSYDVFLSFR…QILKDIFDKF (170 aa)). Residues 19–24 (RGEDTR) and Gly-52 contribute to the NAD(+) site. Residue Glu-86 is part of the active site. One can recognise an NB-ARC domain in the interval 198 to 417 (KKLSSLLRMD…IDRLKDNPEG (220 aa)). 18 LRR repeats span residues 200–224 (LSSLLRMDLKGVRLVGIWGMGGVGK), 252–275 (LQHHTLLYLQKTLLSKLLKVEFVD), 417–440 (GEIMATLKISFDGLRDYEKSIFLD), 599–622 (PSKLVYLTMKGSSIIELWNGAKRL), 645–669 (ITNLERLILSSCDALVEVHPSVGFL), 670–693 (KNLILLNMDHCISLERLPAIIQSE), 716–739 (MTHLKKLDLTSTGIRELPASIEHL), 741–763 (SLENLQMHSCNQLVSLPSSIWRF), 784–807 (SNCTRELILKLVSIKELPTSIGNL), 808–831 (TSLNFLEICNCKTISSLSSSIWGL), 832–857 (TSLTTLKLLDCRKLKNLPGIPNAINH), 878–902 (LDLLRIIDMSWCSCISSLPHNIWML), 904–926 (FLRILCISYCSRLEYLPENLGHL), 927–949 (EHLEELLADGTGILRLPSSVARL), 961–983 (FAIGPKVQYSSSMLNLPDDVFGS), 987–1010 (LGSVVKLNLSGNGFCNLPETMNQL), 1013–1036 (LEYLDITFCQRLEALPELPPSIKE), and 1045–1070 (LRIMEDLVIKCKELNLIAVTKIEYQN).

The protein belongs to the disease resistance TIR-NB-LRR family. Homodimer.

It carries out the reaction NAD(+) + H2O = ADP-D-ribose + nicotinamide + H(+). The catalysed reaction is NAD(+) = 2'cADPR + nicotinamide + H(+). Its function is as follows. Disease resistance (R) protein that specifically recognizes the Xanthomonas and Pseudomonas effector proteins XopQ and HopQ1, and triggers cell death. An NAD(+) hydrolase (NADase): in response to activation, catalyzes cleavage of NAD(+) into ADP-D-ribose (ADPR) and nicotinamide; NAD(+) cleavage triggers a defense system that promotes cell death. Makes small amounts of 2' cyclic ADPR (2'cADPR). The protein is Disease resistance protein Roq1 of Nicotiana benthamiana.